Reading from the N-terminus, the 187-residue chain is Flavin prenyltransferase UbiX (187 aa).

FMN contacts are provided by residues 9–11, T34, 88–91, and R123; these read GSS and SISS. Dimethylallyl phosphate-binding residues include Y153 and K169.

The protein belongs to the UbiX/PAD1 family.

The enzyme catalyses dimethylallyl phosphate + FMNH2 = prenylated FMNH2 + phosphate. Functionally, flavin prenyltransferase that catalyzes the synthesis of the prenylated FMN cofactor (prenyl-FMN) for 4-hydroxy-3-polyprenylbenzoic acid decarboxylase UbiD. The prenyltransferase is metal-independent and links a dimethylallyl moiety from dimethylallyl monophosphate (DMAP) to the flavin N5 and C6 atoms of FMN. The polypeptide is Flavin prenyltransferase UbiX (Campylobacter jejuni subsp. jejuni serotype O:2 (strain ATCC 700819 / NCTC 11168)).